The primary structure comprises 183 residues: Ribosome-recycling factor (183 aa).

The protein belongs to the RRF family.

Its subcellular location is the cytoplasm. Responsible for the release of ribosomes from messenger RNA at the termination of protein biosynthesis. May increase the efficiency of translation by recycling ribosomes from one round of translation to another. This chain is Ribosome-recycling factor, found in Mycoplasmoides gallisepticum (strain R(low / passage 15 / clone 2)) (Mycoplasma gallisepticum).